A 446-amino-acid chain; its full sequence is Tubulin beta chain (446 aa).

GTP contacts are provided by Q11, E69, S138, G142, T143, G144, N204, and N226. E69 is a binding site for Mg(2+). The interval Y425 to E446 is disordered. Acidic residues predominate over residues E432–E446.

This sequence belongs to the tubulin family. As to quaternary structure, dimer of alpha and beta chains. A typical microtubule is a hollow water-filled tube with an outer diameter of 25 nm and an inner diameter of 15 nM. Alpha-beta heterodimers associate head-to-tail to form protofilaments running lengthwise along the microtubule wall with the beta-tubulin subunit facing the microtubule plus end conferring a structural polarity. Microtubules usually have 13 protofilaments but different protofilament numbers can be found in some organisms and specialized cells. Mg(2+) is required as a cofactor.

It localises to the cytoplasm. The protein resides in the cytoskeleton. In terms of biological role, tubulin is the major constituent of microtubules, a cylinder consisting of laterally associated linear protofilaments composed of alpha- and beta-tubulin heterodimers. Microtubules grow by the addition of GTP-tubulin dimers to the microtubule end, where a stabilizing cap forms. Below the cap, tubulin dimers are in GDP-bound state, owing to GTPase activity of alpha-tubulin. The protein is Tubulin beta chain (TUB2) of Blumeria hordei (Barley powdery mildew).